The sequence spans 890 residues: Kinesin-like protein KIF20A (890 aa).

The residue at position 2 (serine 2) is an N-acetylserine. Phosphoserine is present on residues serine 7, serine 14, and serine 21. The region spanning 64–507 (KVKVYLRVRP…AKFSAIASQL (444 aa)) is the Kinesin motor domain. ATP is bound at residue 160–167 (GVTNSGKT). At serine 528 the chain carries Phosphoserine; by PLK1. Serine 532, serine 662, serine 668, serine 685, and serine 825 each carry phosphoserine. Residues 611–762 (LDTQKELLEE…ESLQSAERAC (152 aa)) are a coiled coil. Residues 763–890 (CHSTGAGKLR…LKSGPFGKKY (128 aa)) are globular. A disordered region spans residues 832-865 (TNQENQQPNQQPPGKKPFLRNLLPRTPTCQSSTD). Threonine 857 is subject to Phosphothreonine. A phosphoserine mark is found at serine 867, serine 878, and serine 883.

The protein belongs to the TRAFAC class myosin-kinesin ATPase superfamily. Kinesin family. Phosphorylated by PLK1 at Ser-528 during mitosis, creating a docking site for PLK1 and recruiting PLK1 at central spindle.

The protein localises to the golgi apparatus. It localises to the cytoplasm. It is found in the cytoskeleton. Its subcellular location is the spindle. In terms of biological role, mitotic kinesin required for chromosome passenger complex (CPC)-mediated cytokinesis. Following phosphorylation by PLK1, involved in recruitment of PLK1 to the central spindle. Interacts with guanosine triphosphate (GTP)-bound forms of RAB6A and RAB6B. May act as a motor required for the retrograde RAB6 regulated transport of Golgi membranes and associated vesicles along microtubules. Has a microtubule plus end-directed motility. This Homo sapiens (Human) protein is Kinesin-like protein KIF20A (KIF20A).